Here is a 67-residue protein sequence, read N- to C-terminus: Protein AaeX (67 aa).

2 consecutive transmembrane segments (helical) span residues 3–23 (LFPV…ELIL) and 43–63 (FVWH…YLIS).

It belongs to the AaeX family.

Its subcellular location is the cell membrane. This is Protein AaeX from Enterobacter sp. (strain 638).